The sequence spans 563 residues: CDKN2A-interacting protein (563 aa).

Ala-2 is modified (N-acetylalanine). The region spanning 19–126 is the XRN2-binding (XTBD) domain; that stretch reads VETLRCEGET…KVKKRGISSS (108 aa). 2 disordered regions span residues 122–289 and 304–351; these read GISS…LLGS and SSSE…PSLL. A Phosphoserine modification is found at Ser-124. The segment covering 147–160 has biased composition (basic and acidic residues); sequence VERDHGKKSAKTDR. Low complexity-rich tracts occupy residues 168–216 and 234–248; these read SSPS…SSQV and SASF…SMNS. Lys-177 participates in a covalent cross-link: Glycyl lysine isopeptide (Lys-Gly) (interchain with G-Cter in SUMO1). Ser-234 carries the post-translational modification Phosphoserine. A compositionally biased stretch (polar residues) spans 249 to 262; that stretch reads HMTQSTDNRQQSGS. Low complexity predominate over residues 270-280; it reads GSSGSASQSSS. Position 340 is a phosphothreonine (Thr-340). Position 371 is a phosphoserine (Ser-371). One can recognise a DRBM domain in the interval 445–520; sequence NHGELLNAAI…SREALKLFLK (76 aa).

It belongs to the CARF family. In terms of assembly, interacts with CDKN2A/p14ARF, p53/TP53 and MDM2. Interacts with CHEK2 and MAPK3. Interacts with XRN2. Post-translationally, may be ubiquitinated.

The protein resides in the nucleus. The protein localises to the nucleoplasm. Regulates DNA damage response and cell proliferation in a dose-dependent manner through a number of signaling pathways involved in cell proliferation, apoptosis and senescence. The sequence is that of CDKN2A-interacting protein (Cdkn2aip) from Mus musculus (Mouse).